We begin with the raw amino-acid sequence, 82 residues long: Defensin-like protein 208 (82 aa).

An N-terminal signal peptide occupies residues 1–29; sequence MAKNLNTVSFTVLLLVLLMASTGILETEA. 3 disulfides stabilise this stretch: Cys38-Cys63, Cys50-Cys76, and Cys54-Cys78.

The protein belongs to the DEFL family.

The protein resides in the secreted. In Arabidopsis thaliana (Mouse-ear cress), this protein is Defensin-like protein 208.